The chain runs to 1350 residues: Ubiquitin carboxyl-terminal hydrolase 47 (1350 aa).

A disordered region spans residues 111-138 (DGEQPQLTSDESGTADSSGLDDSSQEKF). Polar residues predominate over residues 115–132 (PQLTSDESGTADSSGLDD). The USP domain maps to 173 to 548 (VGLVNQAMTC…NAYMLMYRLK (376 aa)). Catalysis depends on cysteine 182, which acts as the Nucleophile. The tract at residues 409 to 437 (EDEKSPQTDSCTDSGAENEGSCHSDQMSN) is disordered. Residues 415 to 437 (QTDSCTDSGAENEGSCHSDQMSN) are compositionally biased toward polar residues. Catalysis depends on histidine 487, which acts as the Proton acceptor. 2 disordered regions span residues 815 to 836 (HPRP…PQED) and 859 to 1000 (SLQQ…ESGK). Over residues 859 to 877 (SLQQHQDGGNGDSSKSTEG) the composition is skewed to polar residues. The span at 916 to 926 (PEERSDSDVNN) shows a compositional bias: basic and acidic residues. The segment covering 929–945 (STSSVDSDILSSSHSSD) has biased composition (low complexity). A compositionally biased stretch (basic and acidic residues) spans 973–982 (KANDGKKETW). Residues 983 to 996 (DTAEEDSGTDSEYD) are compositionally biased toward acidic residues.

It belongs to the peptidase C19 family. USP47 subfamily.

The protein localises to the cytoplasm. The enzyme catalyses Thiol-dependent hydrolysis of ester, thioester, amide, peptide and isopeptide bonds formed by the C-terminal Gly of ubiquitin (a 76-residue protein attached to proteins as an intracellular targeting signal).. Ubiquitin-specific protease that specifically deubiquitinates monoubiquitinated DNA polymerase beta (polb), stabilizing polb thereby playing a role in base-excision repair (BER). In Xenopus laevis (African clawed frog), this protein is Ubiquitin carboxyl-terminal hydrolase 47 (usp47).